Reading from the N-terminus, the 657-residue chain is Heat shock protein hsp-6 (657 aa).

The transit peptide at 1-27 (MLSARSFLSSARTIARSSLMSARSLSD) directs the protein to the mitochondrion. The interval 637-657 (KNSGGDAQEAKTAEEPKKEQN) is disordered. Over residues 644-657 (QEAKTAEEPKKEQN) the composition is skewed to basic and acidic residues.

The protein belongs to the heat shock protein 70 family.

It localises to the mitochondrion. This Caenorhabditis elegans protein is Heat shock protein hsp-6.